A 505-amino-acid chain; its full sequence is Beta-glucosidase 3 (505 aa).

Residues 1–22 (MAAAAAFFCALLFISVQHGVLG) form the signal peptide. A beta-D-glucoside is bound by residues glutamine 43 and histidine 143. Glutamate 189 acts as the Proton donor in catalysis. Cysteine 208 and cysteine 217 are oxidised to a cystine. Asparagine 221 is a glycosylation site (N-linked (GlcNAc...) asparagine). The a beta-D-glucoside site is built by tyrosine 333 and glutamate 405. The Nucleophile role is filled by glutamate 405. 2 N-linked (GlcNAc...) asparagine glycosylation sites follow: asparagine 415 and asparagine 436. Residues tryptophan 450 and tyrosine 466 each contribute to the a beta-D-glucoside site.

It belongs to the glycosyl hydrolase 1 family.

The catalysed reaction is Hydrolysis of terminal, non-reducing beta-D-glucosyl residues with release of beta-D-glucose.. In Oryza sativa subsp. japonica (Rice), this protein is Beta-glucosidase 3 (BGLU3).